The chain runs to 391 residues: Thioredoxin-interacting protein (391 aa).

Lys-212 participates in a covalent cross-link: Glycyl lysine isopeptide (Lys-Gly) (interchain with G-Cter in ubiquitin). Ser-361 carries the post-translational modification Phosphoserine.

This sequence belongs to the arrestin family. As to quaternary structure, homodimer; disulfide-linked. Interacts with TXN/thioredoxin through its redox-active site. Interacts with transcriptional repressors ZBTB16, ZBTB32 and HDAC1. Interacts with DDIT4. Post-translationally, ubiquitinated; undergoes heterotypic 'Lys-48'-/'Lys-63'-branched polyubiquitination catalyzed by ITCH and UBR5 resulting in proteasomal degradation. Deubiquitinated by USP5, leading to TXNIP stabilization.

The protein resides in the cytoplasm. It is found in the nucleus. Functionally, may act as an oxidative stress mediator by inhibiting thioredoxin activity or by limiting its bioavailability. Interacts with COPS5 and restores COPS5-induced suppression of CDKN1B stability, blocking the COPS5-mediated translocation of CDKN1B from the nucleus to the cytoplasm. Functions as a transcriptional repressor, possibly by acting as a bridge molecule between transcription factors and corepressor complexes, and over-expression will induce G0/G1 cell cycle arrest. Required for the maturation of natural killer cells. Acts as a suppressor of tumor cell growth. Inhibits the proteasomal degradation of DDIT4, and thereby contributes to the inhibition of the mammalian target of rapamycin complex 1 (mTORC1). This chain is Thioredoxin-interacting protein (TXNIP), found in Homo sapiens (Human).